A 404-amino-acid chain; its full sequence is G-protein coupled receptor 182 (404 aa).

Residues M1–F57 are Extracellular-facing. 2 N-linked (GlcNAc...) asparagine glycosylation sites follow: N28 and N37. Residues A58–W79 form a helical membrane-spanning segment. Over R80–L90 the chain is Cytoplasmic. Residues Y91–V113 form a helical membrane-spanning segment. Topologically, residues T114 to R127 are extracellular. A disulfide bond links C126 and C202. Residues F128–V149 form a helical membrane-spanning segment. Over D150–R170 the chain is Cytoplasmic. The helical transmembrane segment at R171–Q193 threads the bilayer. Residues L194 to A217 lie on the Extracellular side of the membrane. Residues V218 to V239 form a helical membrane-spanning segment. The Cytoplasmic portion of the chain corresponds to L240 to L258. A helical transmembrane segment spans residues L259 to L280. Residues L281–Y299 lie on the Extracellular side of the membrane. Residues F300–Y320 form a helical membrane-spanning segment. Topologically, residues N321–S404 are cytoplasmic.

This sequence belongs to the G-protein coupled receptor 1 family. As to expression, highly expressed in heart, skeletal muscle, immune system, adrenal gland and liver.

It localises to the cell membrane. Orphan receptor. The polypeptide is G-protein coupled receptor 182 (GPR182) (Homo sapiens (Human)).